A 243-amino-acid polypeptide reads, in one-letter code: Small ribosomal subunit protein uS3 (243 aa).

A KH type-2 domain is found at 39–107 (IRAYLIKELK…ETHLNIVEVR (69 aa)). The segment at 214 to 243 (ASERRGLEGDAQGPASRERGDRPDRRRENA) is disordered. Positions 229 to 243 (SRERGDRPDRRRENA) are enriched in basic and acidic residues.

It belongs to the universal ribosomal protein uS3 family. In terms of assembly, part of the 30S ribosomal subunit. Forms a tight complex with proteins S10 and S14.

Its function is as follows. Binds the lower part of the 30S subunit head. Binds mRNA in the 70S ribosome, positioning it for translation. The polypeptide is Small ribosomal subunit protein uS3 (Agrobacterium fabrum (strain C58 / ATCC 33970) (Agrobacterium tumefaciens (strain C58))).